The following is a 197-amino-acid chain: Isopentenyl-diphosphate Delta-isomerase (197 aa).

Residues H41 and H48 each coordinate Mn(2+). One can recognise a Nudix hydrolase domain in the interval R46 to A183. The active site involves C83. Residue C83 coordinates Mg(2+). Residue H85 coordinates Mn(2+). Position 103 (E103) interacts with Mg(2+). Mn(2+) contacts are provided by E130 and E132. The active site involves E132.

Belongs to the IPP isomerase type 1 family. It depends on Mg(2+) as a cofactor. Mn(2+) is required as a cofactor.

The protein localises to the cytoplasm. The catalysed reaction is isopentenyl diphosphate = dimethylallyl diphosphate. The protein operates within isoprenoid biosynthesis; dimethylallyl diphosphate biosynthesis; dimethylallyl diphosphate from isopentenyl diphosphate: step 1/1. Its function is as follows. Catalyzes the 1,3-allylic rearrangement of the homoallylic substrate isopentenyl (IPP) to its highly electrophilic allylic isomer, dimethylallyl diphosphate (DMAPP). The chain is Isopentenyl-diphosphate Delta-isomerase from Streptomyces coelicolor (strain ATCC BAA-471 / A3(2) / M145).